Here is a 227-residue protein sequence, read N- to C-terminus: Cytidylate kinase (227 aa).

12–20 (GPSGAGKGT) provides a ligand contact to ATP.

It belongs to the cytidylate kinase family. Type 1 subfamily.

Its subcellular location is the cytoplasm. It catalyses the reaction CMP + ATP = CDP + ADP. The enzyme catalyses dCMP + ATP = dCDP + ADP. The polypeptide is Cytidylate kinase (Erwinia tasmaniensis (strain DSM 17950 / CFBP 7177 / CIP 109463 / NCPPB 4357 / Et1/99)).